A 489-amino-acid polypeptide reads, in one-letter code: Tandem C2 domains nuclear protein (489 aa).

5 positions are modified to phosphoserine: serine 82, serine 155, serine 167, serine 173, and serine 210. The segment at 189–214 (DSFSSVPSSSSSRKNSQGSNRSLDTI) is disordered. The span at 191–210 (FSSVPSSSSSRKNSQGSNRS) shows a compositional bias: low complexity. Residues threonine 213 and threonine 215 each carry the phosphothreonine modification. Serine 217 is modified (phosphoserine). C2 domains lie at 222–341 (DLGR…SLEI) and 343–470 (APSK…NQWK). The Nuclear localization signal motif lies at 446-448 (RRK).

Its subcellular location is the nucleus. The polypeptide is Tandem C2 domains nuclear protein (Tc2n) (Mus musculus (Mouse)).